Reading from the N-terminus, the 122-residue chain is Large ribosomal subunit protein uL14 (122 aa).

Belongs to the universal ribosomal protein uL14 family. In terms of assembly, part of the 50S ribosomal subunit. Forms a cluster with proteins L3 and L19. In the 70S ribosome, L14 and L19 interact and together make contacts with the 16S rRNA in bridges B5 and B8.

Functionally, binds to 23S rRNA. Forms part of two intersubunit bridges in the 70S ribosome. The chain is Large ribosomal subunit protein uL14 from Latilactobacillus sakei subsp. sakei (strain 23K) (Lactobacillus sakei subsp. sakei).